Reading from the N-terminus, the 259-residue chain is 4-hydroxy-tetrahydrodipicolinate reductase (259 aa).

NAD(+) is bound by residues Gly9–Met14 and Glu35. Arg36 contributes to the NADP(+) binding site. NAD(+) is bound by residues Gly92–Thr94 and Ala116–Met119. The Proton donor/acceptor role is filled by His149. His150 lines the (S)-2,3,4,5-tetrahydrodipicolinate pocket. The active-site Proton donor is the Lys153. Gly159–Thr160 is a binding site for (S)-2,3,4,5-tetrahydrodipicolinate.

This sequence belongs to the DapB family.

Its subcellular location is the cytoplasm. The catalysed reaction is (S)-2,3,4,5-tetrahydrodipicolinate + NAD(+) + H2O = (2S,4S)-4-hydroxy-2,3,4,5-tetrahydrodipicolinate + NADH + H(+). The enzyme catalyses (S)-2,3,4,5-tetrahydrodipicolinate + NADP(+) + H2O = (2S,4S)-4-hydroxy-2,3,4,5-tetrahydrodipicolinate + NADPH + H(+). The protein operates within amino-acid biosynthesis; L-lysine biosynthesis via DAP pathway; (S)-tetrahydrodipicolinate from L-aspartate: step 4/4. Catalyzes the conversion of 4-hydroxy-tetrahydrodipicolinate (HTPA) to tetrahydrodipicolinate. The chain is 4-hydroxy-tetrahydrodipicolinate reductase from Oleidesulfovibrio alaskensis (strain ATCC BAA-1058 / DSM 17464 / G20) (Desulfovibrio alaskensis).